Reading from the N-terminus, the 93-residue chain is uncharacterized protein (93 aa).

The N-terminal stretch at 1-11 (MALMVLMALVG) is a signal peptide. Residue cysteine 12 is the site of N-palmitoyl cysteine attachment. Cysteine 12 is lipidated: S-diacylglycerol cysteine.

The protein localises to the cell membrane. This is an uncharacterized protein from Escherichia coli O6:K15:H31 (strain 536 / UPEC).